Reading from the N-terminus, the 163-residue chain is uncharacterized protein (163 aa).

This sequence belongs to the IMPDH/GMPR family.

This is an uncharacterized protein from Haemophilus influenzae (strain ATCC 51907 / DSM 11121 / KW20 / Rd).